Consider the following 89-residue polypeptide: Cell division topological specificity factor (89 aa).

The protein belongs to the MinE family.

Prevents the cell division inhibition by proteins MinC and MinD at internal division sites while permitting inhibition at polar sites. This ensures cell division at the proper site by restricting the formation of a division septum at the midpoint of the long axis of the cell. The sequence is that of Cell division topological specificity factor from Laribacter hongkongensis (strain HLHK9).